A 229-amino-acid polypeptide reads, in one-letter code: Probable endo-1,4-beta-xylanase A (229 aa).

The first 18 residues, 1 to 18 (MVSFKYLFLAASALGALA), serve as a signal peptide directing secretion. N-linked (GlcNAc...) asparagine glycans are attached at residues Asn30 and Asn100. The 189-residue stretch at 41-229 (AGTPSSTGWN…SSGSSSITVY (189 aa)) folds into the GH11 domain. Catalysis depends on Glu125, which acts as the Nucleophile. Glu216 serves as the catalytic Proton donor.

Belongs to the glycosyl hydrolase 11 (cellulase G) family.

It localises to the secreted. It catalyses the reaction Endohydrolysis of (1-&gt;4)-beta-D-xylosidic linkages in xylans.. It participates in glycan degradation; xylan degradation. Functionally, endo-1,4-beta-xylanase involved in the hydrolysis of xylan, a major structural heterogeneous polysaccharide found in plant biomass representing the second most abundant polysaccharide in the biosphere, after cellulose. This Aspergillus clavatus (strain ATCC 1007 / CBS 513.65 / DSM 816 / NCTC 3887 / NRRL 1 / QM 1276 / 107) protein is Probable endo-1,4-beta-xylanase A (xlnA).